The sequence spans 293 residues: Acetylglutamate kinase (293 aa).

Residues 67 to 68, Arg89, and Asn190 contribute to the substrate site; that span reads GG.

The protein belongs to the acetylglutamate kinase family. ArgB subfamily.

Its subcellular location is the cytoplasm. The catalysed reaction is N-acetyl-L-glutamate + ATP = N-acetyl-L-glutamyl 5-phosphate + ADP. Its pathway is amino-acid biosynthesis; L-arginine biosynthesis; N(2)-acetyl-L-ornithine from L-glutamate: step 2/4. Functionally, catalyzes the ATP-dependent phosphorylation of N-acetyl-L-glutamate. The chain is Acetylglutamate kinase from Nitrosospira multiformis (strain ATCC 25196 / NCIMB 11849 / C 71).